A 456-amino-acid polypeptide reads, in one-letter code: Transcription factor bHLH62 (456 aa).

The span at R159–P185 shows a compositional bias: polar residues. The tract at residues R159–D254 is disordered. Residues K223 to D254 are compositionally biased toward basic and acidic residues. One can recognise a bHLH domain in the interval Q264 to L314.

Homodimer. As to expression, expressed constitutively in roots, leaves, stems, and flowers.

It is found in the nucleus. This is Transcription factor bHLH62 (BHLH62) from Arabidopsis thaliana (Mouse-ear cress).